The sequence spans 323 residues: Probable proline iminopeptidase (323 aa).

Residues 37–301 (VVLHGGPGSR…VIVDEAGHDA (265 aa)) form the AB hydrolase-1 domain. The active-site Nucleophile is S114. The active site involves D271. The active-site Proton donor is the H299.

The protein belongs to the peptidase S33 family.

It is found in the cytoplasm. It catalyses the reaction Release of N-terminal proline from a peptide.. In terms of biological role, specifically catalyzes the removal of N-terminal proline residues from peptides. This chain is Probable proline iminopeptidase, found in Streptomyces coelicolor (strain ATCC BAA-471 / A3(2) / M145).